Here is a 556-residue protein sequence, read N- to C-terminus: Formate--tetrahydrofolate ligase (556 aa).

65–72 (TPAGEGKS) serves as a coordination point for ATP.

The protein belongs to the formate--tetrahydrofolate ligase family.

The catalysed reaction is (6S)-5,6,7,8-tetrahydrofolate + formate + ATP = (6R)-10-formyltetrahydrofolate + ADP + phosphate. It participates in one-carbon metabolism; tetrahydrofolate interconversion. This is Formate--tetrahydrofolate ligase from Streptococcus agalactiae serotype Ia (strain ATCC 27591 / A909 / CDC SS700).